The following is a 172-amino-acid chain: Co-chaperone protein HscB (172 aa).

One can recognise a J domain in the interval 2 to 74 (DYFTLFGLPI…LKRAEYMLSL (73 aa)).

This sequence belongs to the HscB family. As to quaternary structure, interacts with HscA and stimulates its ATPase activity. Interacts with IscU.

Functionally, co-chaperone involved in the maturation of iron-sulfur cluster-containing proteins. Seems to help targeting proteins to be folded toward HscA. The polypeptide is Co-chaperone protein HscB (Pectobacterium carotovorum subsp. carotovorum (strain PC1)).